The following is a 287-amino-acid chain: Ferredoxin-type protein NapH (287 aa).

Residues 1–29 (MANRKRDAGREALEKKGWWRSHRWLVLRR) lie on the Cytoplasmic side of the membrane. A helical transmembrane segment spans residues 30–50 (LCQFFVLGMFLSGPWFGVWIL). Over 51-79 (HGNYSSSLLFDTVPLTDPLMTLQSLASGH) the chain is Periplasmic. Residues 80–100 (LPATVALTGAVIITVLYALAG) traverse the membrane as a helical segment. Residues 101-139 (KRLFCSWVCPLNPITDLANWLRRRFDLNQSATIPRHIRY) lie on the Cytoplasmic side of the membrane. A helical membrane pass occupies residues 140–160 (VLLVVILVGSALTGTLIWEWI). Residues 161 to 170 (NPVSLMGRSL) lie on the Periplasmic side of the membrane. The helical transmembrane segment at 171-191 (VMGFGSGALLILALFLFDLLV) threads the bilayer. Residues 192-287 (VEHGWCGHIC…TTRWSSGAKS (96 aa)) lie on the Cytoplasmic side of the membrane. 2 4Fe-4S ferredoxin-type domains span residues 217–247 (TVAA…APVL) and 251–280 (SPVQ…ITTR). [4Fe-4S] cluster contacts are provided by C226, C229, C232, C236, C260, C263, C266, and C270.

As to quaternary structure, interacts with NapC. Requires [4Fe-4S] cluster as cofactor.

The protein resides in the cell inner membrane. Required for electron transfer from ubiquinol, via NapC, to the periplasmic nitrate reductase NapAB complex. The protein is Ferredoxin-type protein NapH (napH) of Escherichia coli (strain K12).